The primary structure comprises 822 residues: AP-1 complex subunit gamma-1 (822 aa).

Positions 597–628 are disordered; sequence EIVQTNGETEPAPLETKPPPSGPQPTSQANDL. A GAE domain is found at 702-817; that stretch reads AGIPSITAYS…QDLAEVNNFP (116 aa).

This sequence belongs to the adaptor complexes large subunit family. As to quaternary structure, adaptor protein complex 1 (AP-1) is a heterotetramer composed of two large adaptins (gamma-type subunit AP1G1 and beta-type subunit AP1B1), a medium adaptin (mu-type subunit AP1M1 or AP1M2) and a small adaptin (sigma-type subunit AP1S1 or AP1S2 or AP1S3). Interacts (via GAE domain) with RABEP1. Interacts with SYNRG/gamma-synergin. Interacts with EPS15. Interacts (via GAE domain) with AP1AR (via coiled-coil domain). Interacts with CLN3 (via dileucine motif); this interaction facilitates lysosomal targeting. Interacts (via GAE domain) with AFTPH/aftiphilin; the interaction is required to recruit AFTPH/aftiphilin to the perinuclear region of the cell. In terms of tissue distribution, widely expressed.

Its subcellular location is the golgi apparatus. The protein resides in the cytoplasmic vesicle. The protein localises to the clathrin-coated vesicle membrane. It localises to the cytoplasm. It is found in the perinuclear region. Its subcellular location is the clathrin-coated vesicle. The protein resides in the membrane. The protein localises to the clathrin-coated pit. Its function is as follows. Subunit of clathrin-associated adaptor protein complex 1 that plays a role in protein sorting in the late-Golgi/trans-Golgi network (TGN) and/or endosomes. The AP complexes mediate both the recruitment of clathrin to membranes and the recognition of sorting signals within the cytosolic tails of transmembrane cargo molecules. In association with AFTPH/aftiphilin in the aftiphilin/p200/gamma-synergin complex, involved in the trafficking of transferrin from early to recycling endosomes, and the membrane trafficking of furin and the lysosomal enzyme cathepsin D between the trans-Golgi network (TGN) and endosomes. This is AP-1 complex subunit gamma-1 (AP1G1) from Homo sapiens (Human).